A 359-amino-acid chain; its full sequence is Glyceraldehyde-3-phosphate dehydrogenase, glycosomal (359 aa).

NAD(+) contacts are provided by residues 12 to 13 (RI), aspartate 38, glutamine 91, and serine 134. D-glyceraldehyde 3-phosphate contacts are provided by residues 165-167 (SCT), threonine 197, 226-227 (TG), and arginine 249. The Nucleophile role is filled by cysteine 166. Asparagine 335 contributes to the NAD(+) binding site. The Microbody targeting signal signature appears at 357 to 359 (ARL).

The protein belongs to the glyceraldehyde-3-phosphate dehydrogenase family. In terms of assembly, homotetramer.

It localises to the glycosome. It carries out the reaction D-glyceraldehyde 3-phosphate + phosphate + NAD(+) = (2R)-3-phospho-glyceroyl phosphate + NADH + H(+). It participates in carbohydrate degradation; glycolysis; pyruvate from D-glyceraldehyde 3-phosphate: step 1/5. The protein is Glyceraldehyde-3-phosphate dehydrogenase, glycosomal of Trypanosoma cruzi.